Reading from the N-terminus, the 253-residue chain is Large ribosomal subunit protein uL4 (253 aa).

The segment at 78-107 (SRAARVPHAKGGRRAHPPKPEADRSEKVNT) is disordered. Over residues 82-94 (RVPHAKGGRRAHP) the composition is skewed to basic residues. The span at 95 to 107 (PKPEADRSEKVNT) shows a compositional bias: basic and acidic residues.

Belongs to the universal ribosomal protein uL4 family. In terms of assembly, part of the 50S ribosomal subunit.

One of the primary rRNA binding proteins, this protein initially binds near the 5'-end of the 23S rRNA. It is important during the early stages of 50S assembly. It makes multiple contacts with different domains of the 23S rRNA in the assembled 50S subunit and ribosome. Its function is as follows. Forms part of the polypeptide exit tunnel. The chain is Large ribosomal subunit protein uL4 from Methanosarcina acetivorans (strain ATCC 35395 / DSM 2834 / JCM 12185 / C2A).